A 156-amino-acid polypeptide reads, in one-letter code: MIP18 family protein galla-2 (156 aa).

Belongs to the MIP18 family. In terms of assembly, component of the CGX complex composed of crb, galla (galla-1 or galla-2) and Xpd. Interacts with crb (via intracellular domain). Also able to interact with Xpd in the absence of crb. Interacts with Mms19.

Component of the crb-galla-Xpd (CGX) complex which is essential for proper mitotic chromosome segregation in early embryos. The CGX complex is also required for cell proliferation in developing wing disks. In the CGX complex, acts with crb to recruit Xpd thus forming the functional complex. This Drosophila melanogaster (Fruit fly) protein is MIP18 family protein galla-2.